The sequence spans 400 residues: 2'-5'-oligoadenylate synthase 1 (400 aa).

The tract at residues 13–60 (DKFIEDYLLPDTCFRMQINHAIDIICGFLKERCFRGSSYPVCVSKVVK) is interaction with dsRNA. Position 63 (S63) interacts with ATP. Residues D75, D77, and D148 each coordinate Mg(2+). The segment at 200–210 (QRPTKLKSLIR) is interaction with dsRNA. R210, K213, and Q229 together coordinate ATP. C397 carries the S-geranylgeranyl cysteine lipid modification.

This sequence belongs to the 2-5A synthase family. As to quaternary structure, monomer. Homotetramer. Requires Mg(2+) as cofactor. Post-translationally, prenylated at C-terminal. C-terminal prenylation is necessary to initiate a block to SARS-CoV-2 and is associated with protection from severe COVID-1. The prenylated form is targeted to perinuclear structures rich in viral dsRNA, whereas the non-prenylated form is diffusely localized and unable to initiate a detectable block to SARS-CoV-2 replication. C-terminal prenylation is also necessary to initiate a block to cardiovirus EMCV. Not prenylated at C-terminal. The non-prenylated form is diffusely localized and unable to initiate a detectable block to SARS-CoV-2 replication. In terms of tissue distribution, expressed in lungs.

The protein resides in the cytoplasm. It is found in the mitochondrion. It localises to the nucleus. Its subcellular location is the microsome. The protein localises to the endoplasmic reticulum. The protein resides in the secreted. It catalyses the reaction 3 ATP = 5'-triphosphoadenylyl-(2'-&gt;5')-adenylyl-(2'-&gt;5')-adenosine + 2 diphosphate. With respect to regulation, produced as a latent enzyme which is activated by dsRNA generated during the course of viral infection. The dsRNA activator must be at least 15 nucleotides long, and no modification of the 2'-hydroxyl group is tolerated. ssRNA or dsDNA do not act as activators. In terms of biological role, interferon-induced, dsRNA-activated antiviral enzyme which plays a critical role in cellular innate antiviral response. In addition, it may also play a role in other cellular processes such as apoptosis, cell growth, differentiation and gene regulation. Synthesizes higher oligomers of 2'-5'-oligoadenylates (2-5A) from ATP which then bind to the inactive monomeric form of ribonuclease L (RNase L) leading to its dimerization and subsequent activation. Activation of RNase L leads to degradation of cellular as well as viral RNA, resulting in the inhibition of protein synthesis, thus terminating viral replication. Can mediate the antiviral effect via the classical RNase L-dependent pathway or an alternative antiviral pathway independent of RNase L. The secreted form displays antiviral effect against vesicular stomatitis virus (VSV), herpes simplex virus type 2 (HSV-2), and encephalomyocarditis virus (EMCV) and stimulates the alternative antiviral pathway independent of RNase L. Functionally, when prenylated at C-terminal, acts as a double-stranded RNA (dsRNA) sensor specifically targeted to membranous replicative organelles in SARS coronavirus-2/SARS-CoV-2 infected cells where it binds to dsRNA structures in the SARS-CoV-2 5'-UTR and initiates a potent block to SARS-CoV-2 replication. Recognizes short stretches of dsRNA and activates RNase L. The binding is remarkably specific, with two conserved stem loops in the SARS-CoV-2 5'- untranslated region (UTR) constituting the principal viral target. The same mechanism is necessary to initiate a block to cardiovirus EMCV. Its function is as follows. Not prenylated at C-terminal, is diffusely localized and unable to initiate a detectable block to SARS-CoV-2 replication. This Homo sapiens (Human) protein is 2'-5'-oligoadenylate synthase 1 (OAS1).